The chain runs to 363 residues: Protein-glutamate methylesterase/protein-glutamine glutaminase of group 3 operon (363 aa).

Residues 7–124 (RVLIVDDSAS…RQALMESSGR (118 aa)) enclose the Response regulatory domain. D58 is subject to 4-aspartylphosphate. Residues 166-357 (PTTERIVCIG…REIMAWQQAK (192 aa)) enclose the CheB-type methylesterase domain. Residues S177, H203, and D299 contribute to the active site.

It belongs to the CheB family. Post-translationally, phosphorylated by CheA. Phosphorylation of the N-terminal regulatory domain activates the methylesterase activity.

Its subcellular location is the cytoplasm. The enzyme catalyses [protein]-L-glutamate 5-O-methyl ester + H2O = L-glutamyl-[protein] + methanol + H(+). It carries out the reaction L-glutaminyl-[protein] + H2O = L-glutamyl-[protein] + NH4(+). Functionally, involved in chemotaxis. Part of a chemotaxis signal transduction system that modulates chemotaxis in response to various stimuli. Catalyzes the demethylation of specific methylglutamate residues introduced into the chemoreceptors (methyl-accepting chemotaxis proteins or MCP) by CheR. Also mediates the irreversible deamidation of specific glutamine residues to glutamic acid. The chain is Protein-glutamate methylesterase/protein-glutamine glutaminase of group 3 operon from Rhodopseudomonas palustris (strain ATCC BAA-98 / CGA009).